A 633-amino-acid chain; its full sequence is Lysophospholipase 1 (633 aa).

The first 20 residues, Met1 to Gly20, serve as a signal peptide directing secretion. The PLA2c domain maps to Gly47–Asn594. N-linked (GlcNAc...) asparagine glycans are attached at residues Asn64, Asn104, Asn139, Asn173, Asn246, Asn290, Asn329, Asn358, Asn397, Asn450, Asn463, Asn469, Asn497, Asn500, Asn521, Asn549, Asn555, and Asn594. Ser609 is lipidated: GPI-like-anchor amidated serine. Positions Ala610–Phe633 are cleaved as a propeptide — removed in mature form.

This sequence belongs to the lysophospholipase family. Post-translationally, the GPI-like anchor contains a phosphoceramide lipid group. The anchor position has not been determined.

The protein resides in the cell membrane. The enzyme catalyses a 1-acyl-sn-glycero-3-phosphocholine + H2O = sn-glycerol 3-phosphocholine + a fatty acid + H(+). Its function is as follows. Catalyzes the release of fatty acids from lysophospholipids. In Aspergillus fumigatus (strain CBS 144.89 / FGSC A1163 / CEA10) (Neosartorya fumigata), this protein is Lysophospholipase 1 (plb1).